The sequence spans 363 residues: MISHTPEVQDINSFSRFEFLKETYGIIWAFIPIFTPVLGITIGVLVIVWLEREISAGIQQRIGPEYAGPLGVLQALADGAKLLFKENLFPSRGETRLFSIGPSIAVISILVSYSVVPFGSHLVLVDLNIGVFLWIAISSIAPIGLLMSGYGSNNKYSFLGGLRAAAQSISYEIPLTLCVLSISLLSNSSSTVDIVEAQSKYGFWGWNLWRQPIGFIIFLISSLAECERLPFDLPEAEEELIAGYQTEYSGIKFGLFYVASYLNLLVSSLFVTILYLGGWNISIPYIFVFDFFEINKTYGVFEPTIGMFITLAKTYLFLFIPITTRWTLPRLRMDQLLNLGWKFLLPISLGNLLLTTSSQLFSL.

Transmembrane regions (helical) follow at residues 30–50 (FIPI…IVWL), 104–124 (IAVI…HLVL), 129–149 (IGVF…LMSG), 248–268 (YSGI…LVSS), 269–289 (LFVT…IFVF), 300–320 (VFEP…FLFI), and 336–356 (LLNL…LLTT).

This sequence belongs to the complex I subunit 1 family. As to quaternary structure, NDH is composed of at least 16 different subunits, 5 of which are encoded in the nucleus.

The protein localises to the plastid. Its subcellular location is the chloroplast thylakoid membrane. The enzyme catalyses a plastoquinone + NADH + (n+1) H(+)(in) = a plastoquinol + NAD(+) + n H(+)(out). It carries out the reaction a plastoquinone + NADPH + (n+1) H(+)(in) = a plastoquinol + NADP(+) + n H(+)(out). Its function is as follows. NDH shuttles electrons from NAD(P)H:plastoquinone, via FMN and iron-sulfur (Fe-S) centers, to quinones in the photosynthetic chain and possibly in a chloroplast respiratory chain. The immediate electron acceptor for the enzyme in this species is believed to be plastoquinone. Couples the redox reaction to proton translocation, and thus conserves the redox energy in a proton gradient. In Morus indica (Mulberry), this protein is NAD(P)H-quinone oxidoreductase subunit 1, chloroplastic.